A 322-amino-acid chain; its full sequence is Reticulocalbin-1 (322 aa).

An N-terminal signal peptide occupies residues methionine 1–alanine 19. The N-linked (GlcNAc...) asparagine glycan is linked to asparagine 44. EF-hand domains are found at residues glutamate 70–arginine 105, tyrosine 106–serine 141, lysine 157–glutamate 192, methionine 194–arginine 229, tryptophan 235–aspartate 270, and histidine 271–serine 306. 29 residues coordinate Ca(2+): aspartate 83, aspartate 85, asparagine 87, tyrosine 89, glutamate 94, aspartate 119, asparagine 121, aspartate 123, lysine 125, glutamate 130, aspartate 170, aspartate 172, aspartate 174, glutamate 181, aspartate 207, asparagine 209, aspartate 211, histidine 213, glutamate 218, aspartate 248, asparagine 250, aspartate 252, lysine 254, glutamate 259, aspartate 284, aspartate 286, aspartate 288, methionine 290, and glutamate 295. The Prevents secretion from ER signature appears at histidine 319 to leucine 322.

Belongs to the CREC family.

The protein resides in the endoplasmic reticulum lumen. Its function is as follows. May regulate calcium-dependent activities in the endoplasmic reticulum lumen or post-ER compartment. The sequence is that of Reticulocalbin-1 (rcn1) from Takifugu rubripes (Japanese pufferfish).